We begin with the raw amino-acid sequence, 430 residues long: 3-phosphoshikimate 1-carboxyvinyltransferase (430 aa).

The 3-phosphoshikimate site is built by Lys-23, Ser-24, and Arg-28. Lys-23 contributes to the phosphoenolpyruvate binding site. Gly-95 and Arg-123 together coordinate phosphoenolpyruvate. 3-phosphoshikimate contacts are provided by Ser-169, Gln-171, Asp-315, and Lys-342. Residue Gln-171 coordinates phosphoenolpyruvate. The active-site Proton acceptor is the Asp-315. Residues Arg-346 and Arg-388 each contribute to the phosphoenolpyruvate site.

The protein belongs to the EPSP synthase family. As to quaternary structure, monomer.

It localises to the cytoplasm. It carries out the reaction 3-phosphoshikimate + phosphoenolpyruvate = 5-O-(1-carboxyvinyl)-3-phosphoshikimate + phosphate. It functions in the pathway metabolic intermediate biosynthesis; chorismate biosynthesis; chorismate from D-erythrose 4-phosphate and phosphoenolpyruvate: step 6/7. Functionally, catalyzes the transfer of the enolpyruvyl moiety of phosphoenolpyruvate (PEP) to the 5-hydroxyl of shikimate-3-phosphate (S3P) to produce enolpyruvyl shikimate-3-phosphate and inorganic phosphate. This is 3-phosphoshikimate 1-carboxyvinyltransferase from Streptococcus pyogenes serotype M1.